The sequence spans 500 residues: Ephrin type-B receptor 3 (500 aa).

The Fibronectin type-III domain occupies 1–64; the sequence is PLLVLDLIIQ…NPVDFSTSLY (64 aa). At 1-113 the chain is on the extracellular side; sequence PLLVLDLIIQ…ERSVQDLLPL (113 aa). Residues 76-103 form a disordered region; it reads HLRRREELTTTTTGLKSREERFQKSDDP. Residues 91-103 show a composition bias toward basic and acidic residues; that stretch reads KSREERFQKSDDP. The chain crosses the membrane as a helical span at residues 114–134; it reads IVGSASAGFVVILAMIVIAVV. At 135–500 the chain is on the cytoplasmic side; it reads CLRRQRTGSE…QMSQTLPIRV (366 aa). Phosphotyrosine; by autocatalysis is present on Tyr168. Residues 187 to 450 enclose the Protein kinase domain; it reads VKIEEVIGAG…QIVSTLDKFL (264 aa). ATP is bound by residues 193 to 201 and Lys219; that span reads IGAGEFGEV. Asp312 functions as the Proton acceptor in the catalytic mechanism. An SAM domain is found at 421–500; sequence LHQLMLECWV…QMSQTLPIRV (80 aa). Positions 498–500 match the PDZ-binding motif; it reads IRV.

The protein belongs to the protein kinase superfamily. Tyr protein kinase family. Ephrin receptor subfamily. In terms of assembly, heterotetramer upon binding of the ligand. The heterotetramer is composed of an ephrin dimer and a receptor dimer. Oligomerization is probably required to induce biological responses. Phosphorylated. Autophosphorylates upon ligand-binding. Autophosphorylation on Tyr-168 is required for interaction with SH2 domain-containing proteins. In terms of tissue distribution, widely expressed in the developing nervous system.

The protein resides in the cell membrane. It is found in the cell projection. Its subcellular location is the dendrite. The enzyme catalyses L-tyrosyl-[protein] + ATP = O-phospho-L-tyrosyl-[protein] + ADP + H(+). Its function is as follows. Receptor tyrosine kinase which binds promiscuously transmembrane ephrin-B family ligands residing on adjacent cells, leading to contact-dependent bidirectional signaling into neighboring cells. The signaling pathway downstream of the receptor is referred to as forward signaling while the signaling pathway downstream of the ephrin ligand is referred to as reverse signaling. Generally has an overlapping and redundant function with EPHB2. Like EPHB2, functions in axon guidance during development. In addition to its role in axon guidance also plays an important redundant role with other ephrin-B receptors in development and maturation of dendritic spines and the formation of excitatory synapses. May control other aspects of development through regulation of cell migration and positioning. May play a role in early pattern formation within the developing nervous system. The chain is Ephrin type-B receptor 3 (ephb3) from Danio rerio (Zebrafish).